We begin with the raw amino-acid sequence, 185 residues long: Ribosome-recycling factor (185 aa).

This sequence belongs to the RRF family.

Its subcellular location is the cytoplasm. Its function is as follows. Responsible for the release of ribosomes from messenger RNA at the termination of protein biosynthesis. May increase the efficiency of translation by recycling ribosomes from one round of translation to another. This chain is Ribosome-recycling factor, found in Edwardsiella ictaluri (strain 93-146).